Reading from the N-terminus, the 297-residue chain is Ketohexokinase (297 aa).

Asp-15, Gly-41, Asn-42, and Asn-45 together coordinate beta-D-fructose. ATP contacts are provided by residues Arg-107, 225 to 228, and 254 to 257; these read AEEG and GAGD. Residue Asp-257 participates in beta-D-fructose binding.

This sequence belongs to the carbohydrate kinase PfkB family. As to quaternary structure, homodimer.

It catalyses the reaction beta-D-fructose + ATP = beta-D-fructose 1-phosphate + ADP + H(+). It functions in the pathway carbohydrate metabolism; fructose metabolism. Its activity is regulated as follows. Requires potassium. Inhibition by ADP. Catalyzes the phosphorylation of the ketose sugar fructose to fructose-1-phosphate. This is Ketohexokinase (KHK) from Pongo abelii (Sumatran orangutan).